A 280-amino-acid polypeptide reads, in one-letter code: Movement protein (280 aa).

Residues Glu248–Ser267 form a disordered region. A compositionally biased stretch (low complexity) spans Glu255 to Ser267.

This sequence belongs to the cucumovirus movement protein family.

The protein localises to the host cell junction. It localises to the host plasmodesma. Functionally, transports viral genome to neighboring plant cells directly through plasmosdesmata, without any budding. The movement protein allows efficient cell to cell propagation, by bypassing the host cell wall barrier. Acts by forming a tubular structure at the host plasmodesmata, enlarging it enough to allow free passage of virion capsids. The polypeptide is Movement protein (Cucumis sativus (Cucumber)).